The following is a 571-amino-acid chain: Sulfite reductase [NADPH] hemoprotein beta-component (571 aa).

Residues cysteine 435, cysteine 441, cysteine 480, and cysteine 484 each contribute to the [4Fe-4S] cluster site. Residue cysteine 484 coordinates siroheme.

The protein belongs to the nitrite and sulfite reductase 4Fe-4S domain family. In terms of assembly, alpha(8)-beta(8). The alpha component is a flavoprotein, the beta component is a hemoprotein. The cofactor is siroheme. Requires [4Fe-4S] cluster as cofactor.

The enzyme catalyses hydrogen sulfide + 3 NADP(+) + 3 H2O = sulfite + 3 NADPH + 4 H(+). It participates in sulfur metabolism; hydrogen sulfide biosynthesis; hydrogen sulfide from sulfite (NADPH route): step 1/1. Component of the sulfite reductase complex that catalyzes the 6-electron reduction of sulfite to sulfide. This is one of several activities required for the biosynthesis of L-cysteine from sulfate. This is Sulfite reductase [NADPH] hemoprotein beta-component from Serratia proteamaculans (strain 568).